The following is a 736-amino-acid chain: MATAVSYCLLSCIFALLVVSFASAGKDDQDKQVYIVYMGALPSRVDYMPMSHHTSILQDVTGESSIQDRLVRNYKRSFNGFAARLTESEREILASMDEVVSVFPSKNLNLQTTTSWNFMGLKEGKRTKRNPLIESDTIIGVIDSGIYPESDSFSGKGFGPPPKKWKGVCKGGTNFTCNNKLIGARYYTPKLEGFPESARDNTGHGSHTASIAAGNAVKHVSFYGLGNGTVRGGVPAARIAVYKVCDPGVIRCTSDGILAAFDDAIADKVDIITVSLGADAVGTFEEDTLAIGAFHAMAKGILTVNGAGNNGPERRTIVSMAPWLFTVAASNMNRAFITKVVLGNGKTIVGRSVNSFDLNGKKYPLVYGKSASSRCDASSAGFCSPGCLDSKRVKGKIVLCDTQRNPGEAQAMGAVASIVRNPYEDAASVFSFPVSVLSEDDYNIVLSYVNSTKNPKAAVLKSETIFNQKAPVVASYSSRGPNPLIHDILKPDITAPGSEILAAYSPYVPPSESDTRHVKYTVISGTSMSCPHVAGVAAYIKTFHPLWSPSMIQSAIMTTAWPMNASTSPSNELAEFAYGAGHVDPIAAIHPGLVYEANKSDHITFLCGFNYTGKKLRLISGDSSSCTKEQTKSLTRNLNYPSMSAQVSGTKPFKVTFRRTVTNVGRPNATYKAKVVGSKLKVKVVPAVLSLKSLYEKKSFTVTVSGAGPKAENLVSAQLIWSDGVHFVRSPIVVYA.

The signal sequence occupies residues 1-24; that stretch reads MATAVSYCLLSCIFALLVVSFASA. The propeptide at 25 to 111 is activation peptide; sequence GKDDQDKQVY…VFPSKNLNLQ (87 aa). Residues 33–110 form the Inhibitor I9 domain; the sequence is VYIVYMGALP…SVFPSKNLNL (78 aa). The Peptidase S8 domain occupies 115–589; the sequence is SWNFMGLKEG…AGHVDPIAAI (475 aa). The active-site Charge relay system is D143. N174 carries an N-linked (GlcNAc...) asparagine glycan. Catalysis depends on H204, which acts as the Charge relay system. N227 is a glycosylation site (N-linked (GlcNAc...) asparagine). Positions 362 to 442 constitute a PA domain; the sequence is KYPLVYGKSA…PVSVLSEDDY (81 aa). Residue N450 is glycosylated (N-linked (GlcNAc...) asparagine). S527 (charge relay system) is an active-site residue. Residues N564, N598, N610, and N668 are each glycosylated (N-linked (GlcNAc...) asparagine).

The protein belongs to the peptidase S8 family. In terms of processing, the C-terminal propeptide is autocleaved.

Its subcellular location is the secreted. The sequence is that of Subtilisin-like protease SBT4.6 from Arabidopsis thaliana (Mouse-ear cress).